We begin with the raw amino-acid sequence, 219 residues long: MLRTGAPNGDLPRAGEVHTGTTIMAVEFDGGVVVGSDSRVSAGEAVVNRVFDKLSPLHQHIYCALSGSAADAQAIADMAAYQLELHGMELEEPPLVLAAANVVRNITYKYREDLSAHLMVAGWDQREGGQVYGTMSGMLIRQPFAIGGSGSTYIYGYVDAAYKPGMSPEECRRFTTNAIALAMKRDGSSGGVIYLATITGAGVDHRVILGDELPRFYDE.

Positions 1–20 are cleaved as a propeptide — removed in mature form; that stretch reads MLRTGAPNGDLPRAGEVHTG. Threonine 21 acts as the Nucleophile in catalysis. 2 positions are modified to N6-acetyllysine: lysine 53 and lysine 109.

This sequence belongs to the peptidase T1B family. As to quaternary structure, the 26S proteasome consists of a 20S proteasome core and two 19S regulatory subunits. The 20S proteasome core is composed of 28 subunits that are arranged in four stacked rings, resulting in a barrel-shaped structure. The two end rings are each formed by seven alpha subunits, and the two central rings are each formed by seven beta subunits. The catalytic chamber with the active sites is on the inside of the barrel. Component of the immunoproteasome, where it displaces the equivalent housekeeping subunit PSMB6. Component of the spermatoproteasome, a form of the proteasome specifically found in testis. In terms of processing, autocleaved. The resulting N-terminal Thr residue of the mature subunit is responsible for the nucleophile proteolytic activity.

The protein localises to the cytoplasm. It localises to the nucleus. The enzyme catalyses Cleavage of peptide bonds with very broad specificity.. In terms of biological role, the proteasome is a multicatalytic proteinase complex which is characterized by its ability to cleave peptides with Arg, Phe, Tyr, Leu, and Glu adjacent to the leaving group at neutral or slightly basic pH. The proteasome has an ATP-dependent proteolytic activity. This subunit is involved in antigen processing to generate class I binding peptides. This Bos taurus (Bovine) protein is Proteasome subunit beta type-9 (PSMB9).